We begin with the raw amino-acid sequence, 2130 residues long: Bromodomain adjacent to zinc finger domain protein 2B (2130 aa).

Disordered stretches follow at residues 1-42 (MESG…TGAA), 82-118 (LFAP…SLNG), 151-293 (GGRK…QKQP), 491-518 (KTTG…PVSN), 543-633 (VDSD…SSIG), 756-790 (EGRR…GSTE), and 944-966 (RKKA…LNKE). Residues 8–33 (TSSSVSSTAAASSPVSSTPSVASAVS) show a composition bias toward low complexity. Over residues 183–206 (ESSSNSDSDSGSSSDTSSEGISSS) the composition is skewed to low complexity. A compositionally biased stretch (acidic residues) spans 207–234 (DSDDLEEDEEEEEDQSAEESEDDESDSE). A compositionally biased stretch (basic and acidic residues) spans 250 to 270 (GVKDMKTDGQKAHEKSQEKRT). Over residues 272–283 (QQIPLVSDSQTH) the composition is skewed to polar residues. Residues 284-293 (SSFQSQQKQP) show a composition bias toward low complexity. Residues 492–505 (TTGNRTLVVPSTSP) show a composition bias toward polar residues. The span at 543 to 554 (VDSDAPSSKESD) shows a compositional bias: basic and acidic residues. Residues 555–611 (DSNDDDDDDEDEDEDDEDDDSDDSQSESDSNSESDTDGSEDEDDEDDKDQDESDTDT) show a composition bias toward acidic residues. The segment covering 623-633 (TGSSIKSSSIG) has biased composition (low complexity). The MBD domain maps to 687 to 762 (VTDERELRVP…RAMEGRRGRP (76 aa)). Residues 756 to 775 (EGRRGRPPNPDRQHSREESR) are compositionally biased toward basic and acidic residues. A coiled-coil region spans residues 797-984 (AKLLRKLQAQ…ELEMAKELKK (188 aa)). The DDT domain maps to 1010-1075 (GSTFSDCLMI…VTAAVCDPGL (66 aa)). Disordered stretches follow at residues 1186–1265 (TGKR…DQTV), 1431–1454 (SLCS…NLFS), 1499–1545 (VTHV…PFAM), and 1773–1795 (HKKH…ERKN). Residues 1220–1244 (SDYDDDDDDDSDDQADEDDEDEEDK) show a composition bias toward acidic residues. The span at 1245 to 1254 (EDKKGKKAEV) shows a compositional bias: basic and acidic residues. Residues 1514–1526 (SHPPSKSPSPVPS) show a composition bias toward pro residues. A PHD-type zinc finger spans residues 1895-1945 (KVYCQICRKGDNEELLLLCDGCDKGCHTYCHRPKITTIPDGDWFCPACIAK). A disordered region spans residues 1957 to 2019 (QIKGKKSNEQ…KQENFTAIKK (63 aa)). Residues 1991 to 2002 (GKTEPKKRKMDE) are compositionally biased toward basic and acidic residues. The span at 2004–2014 (VSVSQGKQENF) shows a compositional bias: polar residues. In terms of domain architecture, Bromo spans 2022 to 2126 (RDDSKDLAIC…KYFEKKWTEI (105 aa)).

Belongs to the WAL family.

It localises to the nucleus. Its function is as follows. Regulatory subunit of the ATP-dependent BRF-1 and BRF-5 ISWI chromatin remodeling complexes, which form ordered nucleosome arrays on chromatin and facilitate access to DNA during DNA-templated processes such as DNA replication, transcription, and repair. Both complexes regulate the spacing of nucleosomes along the chromatin and have the ability to slide mononucleosomes to the center of a DNA template. The BRF-1 ISWI chromatin remodeling complex has a lower ATP hydrolysis rate than the BRF-5 ISWI chromatin remodeling complex. Chromatin reader protein. Represses the expression of mitochondrial function-related genes, perhaps by transcriptional regulation. This is Bromodomain adjacent to zinc finger domain protein 2B (BAZ2B) from Gallus gallus (Chicken).